The sequence spans 138 residues: Regulator of ribonuclease activity B (138 aa).

Residues 111 to 138 are disordered; it reads WGTYFEDPNGEEGDDDDYVDEDDDGVRH. Residues 118-138 are compositionally biased toward acidic residues; it reads PNGEEGDDDDYVDEDDDGVRH.

This sequence belongs to the RraB family. Interacts with the C-terminal region of Rne.

Its subcellular location is the cytoplasm. Its function is as follows. Globally modulates RNA abundance by binding to RNase E (Rne) and regulating its endonucleolytic activity. Can modulate Rne action in a substrate-dependent manner by altering the composition of the degradosome. In Salmonella typhi, this protein is Regulator of ribonuclease activity B.